The sequence spans 512 residues: Maturase K (512 aa).

The protein belongs to the intron maturase 2 family. MatK subfamily.

It is found in the plastid. It localises to the chloroplast. In terms of biological role, usually encoded in the trnK tRNA gene intron. Probably assists in splicing its own and other chloroplast group II introns. In Wolffiella gladiata (Florida mud-midget), this protein is Maturase K.